A 431-amino-acid polypeptide reads, in one-letter code: Neuronal pentraxin-2 (431 aa).

The signal sequence occupies residues 1 to 15; it reads MLALLAASVALAVAA. N-linked (GlcNAc...) asparagine glycosylation is found at Asn148 and Asn189. Positions 223–424 constitute a Pentraxin (PTX) domain; that stretch reads DAFKVSLPLR…GASKWPVETC (202 aa). Cys253 and Cys313 are disulfide-bonded. Positions 277, 355, 356, 357, and 367 each coordinate Ca(2+). Asn393 carries N-linked (GlcNAc...) asparagine glycosylation.

Homooligomer or heterooligomer (probably pentamer) with neuronal pentraxin receptor (NPTXR). Ca(2+) serves as cofactor. Brain, pancreas, liver, heart and skeletal muscle. Highest levels are seen in the testis.

The protein resides in the secreted. In terms of biological role, likely to play role in the modification of cellular properties that underlie long-term plasticity. Binds to agar matrix in a calcium-dependent manner. This is Neuronal pentraxin-2 (NPTX2) from Homo sapiens (Human).